A 172-amino-acid polypeptide reads, in one-letter code: Cytochrome c oxidase subunit 4 isoform 2, mitochondrial (172 aa).

The transit peptide at 1–34 (MFSRAARSLVMRTGLRTRGTGTHSPGDAAGSQRR) directs the protein to the mitochondrion. Low complexity predominate over residues 13-22 (TGLRTRGTGT). Residues 13–32 (TGLRTRGTGTHSPGDAAGSQ) are disordered. Residues 35–101 (MTPYVDCYAQ…TFAEMNHRSN (67 aa)) lie on the Mitochondrial matrix side of the membrane. Residues 102–127 (EWKTVMGCVFFFIGFTALVIWWQRVY) traverse the membrane as a helical segment. The Mitochondrial intermembrane segment spans residues 128 to 172 (VFPKKVVTLTEERKAQQLQRLLDMKSNPIQGLAAHWDYEKKEWKK).

It belongs to the cytochrome c oxidase IV family. Component of the cytochrome c oxidase (complex IV, CIV), a multisubunit enzyme composed of 14 subunits. The complex is composed of a catalytic core of 3 subunits MT-CO1, MT-CO2 and MT-CO3, encoded in the mitochondrial DNA, and 11 supernumerary subunits COX4I, COX5A, COX5B, COX6A, COX6B, COX6C, COX7A, COX7B, COX7C, COX8 and NDUFA4, which are encoded in the nuclear genome. The complex exists as a monomer or a dimer and forms supercomplexes (SCs) in the inner mitochondrial membrane with NADH-ubiquinone oxidoreductase (complex I, CI) and ubiquinol-cytochrome c oxidoreductase (cytochrome b-c1 complex, complex III, CIII), resulting in different assemblies (supercomplex SCI(1)III(2)IV(1) and megacomplex MCI(2)III(2)IV(2)).

It is found in the mitochondrion inner membrane. The protein operates within energy metabolism; oxidative phosphorylation. Its function is as follows. Component of the cytochrome c oxidase, the last enzyme in the mitochondrial electron transport chain which drives oxidative phosphorylation. The respiratory chain contains 3 multisubunit complexes succinate dehydrogenase (complex II, CII), ubiquinol-cytochrome c oxidoreductase (cytochrome b-c1 complex, complex III, CIII) and cytochrome c oxidase (complex IV, CIV), that cooperate to transfer electrons derived from NADH and succinate to molecular oxygen, creating an electrochemical gradient over the inner membrane that drives transmembrane transport and the ATP synthase. Cytochrome c oxidase is the component of the respiratory chain that catalyzes the reduction of oxygen to water. Electrons originating from reduced cytochrome c in the intermembrane space (IMS) are transferred via the dinuclear copper A center (CU(A)) of subunit 2 and heme A of subunit 1 to the active site in subunit 1, a binuclear center (BNC) formed by heme A3 and copper B (CU(B)). The BNC reduces molecular oxygen to 2 water molecules using 4 electrons from cytochrome c in the IMS and 4 protons from the mitochondrial matrix. The chain is Cytochrome c oxidase subunit 4 isoform 2, mitochondrial (Cox4i2) from Mus musculus (Mouse).